Here is a 311-residue protein sequence, read N- to C-terminus: Cytosolic Fe-S cluster assembly factor Nubp1 homolog (311 aa).

Residues C9, C23, C26, and C32 each coordinate [4Fe-4S] cluster. Residue G63–S70 participates in ATP binding. Residues C240 and C243 each coordinate [4Fe-4S] cluster.

It belongs to the Mrp/NBP35 ATP-binding proteins family. NUBP1/NBP35 subfamily. As to quaternary structure, heterotetramer of 2 Nubp1 and 2 Nubp2 chains. [4Fe-4S] cluster is required as a cofactor.

The protein resides in the cytoplasm. Functionally, component of the cytosolic iron-sulfur (Fe/S) protein assembly (CIA) machinery. Required for maturation of extramitochondrial Fe-S proteins. The Nubp1-Nubp2 heterotetramer forms a Fe-S scaffold complex, mediating the de novo assembly of an Fe-S cluster and its transfer to target apoproteins. The sequence is that of Cytosolic Fe-S cluster assembly factor Nubp1 homolog from Drosophila pseudoobscura pseudoobscura (Fruit fly).